A 655-amino-acid polypeptide reads, in one-letter code: p-hydroxybenzoic acid efflux pump subunit AaeB (655 aa).

Residues 1-12 are Periplasmic-facing; that stretch reads MGIFSIANQHIR. The helical transmembrane segment at 13–33 threads the bilayer; it reads FAVKLATAIVLALFVGFHFQL. At 34–37 the chain is on the cytoplasmic side; sequence ETPR. A helical transmembrane segment spans residues 38 to 58; it reads WAVLTAAIVAAGTAFAAGGEP. Topologically, residues 59-68 are periplasmic; sequence YSGAIRYRGF. A helical transmembrane segment spans residues 69-89; it reads LRIIGTFIGCIAGLVIIIAMI. Over 90 to 92 the chain is Cytoplasmic; the sequence is RAP. Residues 93-113 traverse the membrane as a helical segment; it reads LLMILVCCIWAGFCTWISSLV. Residues 114–120 lie on the Periplasmic side of the membrane; that stretch reads RIENSYA. A helical transmembrane segment spans residues 121-141; that stretch reads WGLAGYTALIIVITIQPEPLL. Residues 142–151 are Cytoplasmic-facing; sequence TPQFAVERCS. The chain crosses the membrane as a helical span at residues 152–172; it reads EIVIGIVCAIMADLLFSPRSI. The Periplasmic portion of the chain corresponds to 173 to 369; that stretch reads KQEVDRELES…RTTLSCILGT (197 aa). The chain crosses the membrane as a helical span at residues 370-390; that stretch reads LFWLWTGWTSGSGAMVMIAVV. Topologically, residues 391-406 are cytoplasmic; that stretch reads TSLAMRLPNPRMVAID. Residues 407-427 form a helical membrane-spanning segment; sequence FIYGTLAALPLGLLYFLVIIP. The Periplasmic portion of the chain corresponds to 428 to 430; sequence NTQ. A helical membrane pass occupies residues 431-451; the sequence is QSMLLLCISLAVLGFFLGIEV. Residues 452–458 are Cytoplasmic-facing; it reads QKRRLGS. Residues 459–479 traverse the membrane as a helical segment; sequence MGALASTINIIVLDNPMTFHF. Topologically, residues 480 to 481 are periplasmic; sequence SQ. A helical membrane pass occupies residues 482–502; that stretch reads FLDSALGQIVGCVLAFTVILL. At 503-655 the chain is on the cytoplasmic side; sequence VRDKSRDRTG…HKYQHALTDS (153 aa).

This sequence belongs to the aromatic acid exporter ArAE (TC 2.A.85) family.

Its subcellular location is the cell inner membrane. Its function is as follows. Forms an efflux pump with AaeA. Could function as a metabolic relief valve, allowing to eliminate certain compounds when they accumulate to high levels in the cell. Substrates are p-hydroxybenzoic acid (pHBA), 6-hydroxy-2-naphthoic and 2-hydroxycinnamate. This is p-hydroxybenzoic acid efflux pump subunit AaeB from Escherichia coli (strain K12).